We begin with the raw amino-acid sequence, 316 residues long: Beta-ketoacyl-[acyl-carrier-protein] synthase III (316 aa).

Residues Cys112 and His243 contribute to the active site. Positions 244–248 (QANLR) are ACP-binding. Asn273 is a catalytic residue.

It belongs to the thiolase-like superfamily. FabH family. In terms of assembly, homodimer.

It is found in the cytoplasm. The catalysed reaction is malonyl-[ACP] + acetyl-CoA + H(+) = 3-oxobutanoyl-[ACP] + CO2 + CoA. Its pathway is lipid metabolism; fatty acid biosynthesis. Functionally, catalyzes the condensation reaction of fatty acid synthesis by the addition to an acyl acceptor of two carbons from malonyl-ACP. Catalyzes the first condensation reaction which initiates fatty acid synthesis and may therefore play a role in governing the total rate of fatty acid production. Possesses both acetoacetyl-ACP synthase and acetyl transacylase activities. Its substrate specificity determines the biosynthesis of branched-chain and/or straight-chain of fatty acids. This is Beta-ketoacyl-[acyl-carrier-protein] synthase III from Actinobacillus succinogenes (strain ATCC 55618 / DSM 22257 / CCUG 43843 / 130Z).